The following is a 1369-amino-acid chain: Phosphoribosylformylglycinamidine synthase (1369 aa).

2 disordered regions span residues 321–352 (HPTA…AKPK) and 373–400 (ENAR…KPDR). An ATP-binding site is contributed by 330 to 341 (GASTGAGGEIRD). ATP is bound at residue alanine 721. 4 residues coordinate Mg(2+): aspartate 722, glutamate 761, asparagine 765, and aspartate 934. Residue serine 936 coordinates ATP. The Glutamine amidotransferase type-1 domain occupies 1116–1369 (MAILREQGVN…MFRNARKQMG (254 aa)). The active-site Nucleophile is cysteine 1209. Residues histidine 1330 and glutamate 1332 contribute to the active site.

In the N-terminal section; belongs to the FGAMS family. In terms of assembly, monomer.

It localises to the cytoplasm. It catalyses the reaction N(2)-formyl-N(1)-(5-phospho-beta-D-ribosyl)glycinamide + L-glutamine + ATP + H2O = 2-formamido-N(1)-(5-O-phospho-beta-D-ribosyl)acetamidine + L-glutamate + ADP + phosphate + H(+). The protein operates within purine metabolism; IMP biosynthesis via de novo pathway; 5-amino-1-(5-phospho-D-ribosyl)imidazole from N(2)-formyl-N(1)-(5-phospho-D-ribosyl)glycinamide: step 1/2. Functionally, phosphoribosylformylglycinamidine synthase involved in the purines biosynthetic pathway. Catalyzes the ATP-dependent conversion of formylglycinamide ribonucleotide (FGAR) and glutamine to yield formylglycinamidine ribonucleotide (FGAM) and glutamate. The sequence is that of Phosphoribosylformylglycinamidine synthase from Ralstonia nicotianae (strain ATCC BAA-1114 / GMI1000) (Ralstonia solanacearum).